We begin with the raw amino-acid sequence, 153 residues long: Transcription antitermination protein NusB (153 aa).

It belongs to the NusB family.

Its function is as follows. Involved in transcription antitermination. Required for transcription of ribosomal RNA (rRNA) genes. Binds specifically to the boxA antiterminator sequence of the ribosomal RNA (rrn) operons. The polypeptide is Transcription antitermination protein NusB (Nitratidesulfovibrio vulgaris (strain ATCC 29579 / DSM 644 / CCUG 34227 / NCIMB 8303 / VKM B-1760 / Hildenborough) (Desulfovibrio vulgaris)).